We begin with the raw amino-acid sequence, 249 residues long: 23S rRNA (guanosine-2'-O-)-methyltransferase RlmB (249 aa).

S-adenosyl-L-methionine is bound by residues G200, I220, and L229.

The protein belongs to the class IV-like SAM-binding methyltransferase superfamily. RNA methyltransferase TrmH family. RlmB subfamily.

The protein resides in the cytoplasm. The enzyme catalyses guanosine(2251) in 23S rRNA + S-adenosyl-L-methionine = 2'-O-methylguanosine(2251) in 23S rRNA + S-adenosyl-L-homocysteine + H(+). Functionally, specifically methylates the ribose of guanosine 2251 in 23S rRNA. The protein is 23S rRNA (guanosine-2'-O-)-methyltransferase RlmB of Xylella fastidiosa (strain Temecula1 / ATCC 700964).